A 504-amino-acid polypeptide reads, in one-letter code: Maturase K (504 aa).

This sequence belongs to the intron maturase 2 family. MatK subfamily.

Its subcellular location is the plastid. The protein localises to the chloroplast. Usually encoded in the trnK tRNA gene intron. Probably assists in splicing its own and other chloroplast group II introns. This chain is Maturase K, found in Simmondsia chinensis (Jojoba).